The chain runs to 294 residues: Hydroxyethylthiazole kinase (294 aa).

A substrate-binding site is contributed by M57. Positions 132 and 196 each coordinate ATP. Substrate is bound at residue G223.

The protein belongs to the Thz kinase family. It depends on Mg(2+) as a cofactor.

It carries out the reaction 5-(2-hydroxyethyl)-4-methylthiazole + ATP = 4-methyl-5-(2-phosphooxyethyl)-thiazole + ADP + H(+). The protein operates within cofactor biosynthesis; thiamine diphosphate biosynthesis; 4-methyl-5-(2-phosphoethyl)-thiazole from 5-(2-hydroxyethyl)-4-methylthiazole: step 1/1. In terms of biological role, catalyzes the phosphorylation of the hydroxyl group of 4-methyl-5-beta-hydroxyethylthiazole (THZ). This chain is Hydroxyethylthiazole kinase, found in Bifidobacterium adolescentis (strain ATCC 15703 / DSM 20083 / NCTC 11814 / E194a).